The following is a 350-amino-acid chain: Phosphotriesterase-related protein (350 aa).

The a divalent metal cation site is built by H22, H24, E169, H201, H230, and D298.

Belongs to the metallo-dependent hydrolases superfamily. Phosphotriesterase family. The cofactor is a divalent metal cation.

The polypeptide is Phosphotriesterase-related protein (Drosophila willistoni (Fruit fly)).